A 421-amino-acid polypeptide reads, in one-letter code: UDP-N-acetylglucosamine 1-carboxyvinyltransferase (421 aa).

22–23 lines the phosphoenolpyruvate pocket; the sequence is KN. Arg-93 serves as a coordination point for UDP-N-acetyl-alpha-D-glucosamine. The active-site Proton donor is Cys-117. The residue at position 117 (Cys-117) is a 2-(S-cysteinyl)pyruvic acid O-phosphothioketal. Residues 122–126, Asp-308, and Val-330 each bind UDP-N-acetyl-alpha-D-glucosamine; that span reads RPVDL.

The protein belongs to the EPSP synthase family. MurA subfamily.

It is found in the cytoplasm. It carries out the reaction phosphoenolpyruvate + UDP-N-acetyl-alpha-D-glucosamine = UDP-N-acetyl-3-O-(1-carboxyvinyl)-alpha-D-glucosamine + phosphate. The protein operates within cell wall biogenesis; peptidoglycan biosynthesis. In terms of biological role, cell wall formation. Adds enolpyruvyl to UDP-N-acetylglucosamine. This Azotobacter vinelandii (strain DJ / ATCC BAA-1303) protein is UDP-N-acetylglucosamine 1-carboxyvinyltransferase.